The chain runs to 261 residues: 5-oxoprolinase subunit A (261 aa).

This sequence belongs to the LamB/PxpA family. Forms a complex composed of PxpA, PxpB and PxpC.

It catalyses the reaction 5-oxo-L-proline + ATP + 2 H2O = L-glutamate + ADP + phosphate + H(+). Catalyzes the cleavage of 5-oxoproline to form L-glutamate coupled to the hydrolysis of ATP to ADP and inorganic phosphate. The sequence is that of 5-oxoprolinase subunit A from Symbiobacterium thermophilum (strain DSM 24528 / JCM 14929 / IAM 14863 / T).